The sequence spans 138 residues: Large ribosomal subunit protein uL16 (138 aa).

Residues methionine 1 to glutamine 13 show a composition bias toward basic residues. The tract at residues methionine 1 to threonine 22 is disordered.

This sequence belongs to the universal ribosomal protein uL16 family. Part of the 50S ribosomal subunit.

Binds 23S rRNA and is also seen to make contacts with the A and possibly P site tRNAs. The sequence is that of Large ribosomal subunit protein uL16 from Polaromonas naphthalenivorans (strain CJ2).